Here is a 311-residue protein sequence, read N- to C-terminus: GTP cyclohydrolase MptA (311 aa).

This sequence belongs to the GTP cyclohydrolase IV family. In terms of assembly, homodimer. It depends on Fe(2+) as a cofactor.

The enzyme catalyses GTP + H2O = 7,8-dihydroneopterin 2',3'-cyclic phosphate + formate + diphosphate + H(+). Its pathway is cofactor biosynthesis; 5,6,7,8-tetrahydromethanopterin biosynthesis. Converts GTP to 7,8-dihydro-D-neopterin 2',3'-cyclic phosphate, the first intermediate in the biosynthesis of coenzyme methanopterin. The polypeptide is GTP cyclohydrolase MptA (Halobacterium salinarum (strain ATCC 29341 / DSM 671 / R1)).